We begin with the raw amino-acid sequence, 244 residues long: 23S rRNA (guanosine-2'-O-)-methyltransferase RlmB (244 aa).

Positions 196, 216, and 225 each coordinate S-adenosyl-L-methionine.

It belongs to the class IV-like SAM-binding methyltransferase superfamily. RNA methyltransferase TrmH family. RlmB subfamily. Homodimer.

The protein resides in the cytoplasm. The catalysed reaction is guanosine(2251) in 23S rRNA + S-adenosyl-L-methionine = 2'-O-methylguanosine(2251) in 23S rRNA + S-adenosyl-L-homocysteine + H(+). Specifically methylates the ribose of guanosine 2251 in 23S rRNA. In Photorhabdus laumondii subsp. laumondii (strain DSM 15139 / CIP 105565 / TT01) (Photorhabdus luminescens subsp. laumondii), this protein is 23S rRNA (guanosine-2'-O-)-methyltransferase RlmB.